The following is a 196-amino-acid chain: uncharacterized protein (196 aa).

It belongs to the CDP-alcohol phosphatidyltransferase class-I family.

This is an uncharacterized protein from Aquifex aeolicus (strain VF5).